The primary structure comprises 539 residues: Probable K(+)/H(+) antiporter subunit D (539 aa).

A run of 14 helical transmembrane segments spans residues 4-23, 36-58, 78-100, 113-135, 140-162, 175-197, 217-239, 251-273, 283-305, 312-331, 335-357, 400-422, 442-464, and 484-506; these read WLDH…AAVL, AIGF…LAAA, FGIV…GLAL, AGHH…FLTG, LFVF…SGPL, LAAS…TLNM, MGSA…SFWL, AGVF…LLVF, FGQE…GVLA, LAGY…VGLG, MLAG…FLLI, VLGL…SGFI, AMSA…AMIA, and VVVI…SLQA.

Belongs to the CPA3 antiporters (TC 2.A.63) subunit D family. As to quaternary structure, may form a hetero-oligomeric complex that consists of six subunits: PhaAB, PhaC, PhaD, PhaE, PhaF and PhaG.

Its subcellular location is the cell membrane. Its function is as follows. Part of a K(+) efflux system which is required for the adaptation of R.meliloti to alkaline pH as well as for the infection process during symbiotic nodule development. The chain is Probable K(+)/H(+) antiporter subunit D (phaD) from Rhizobium meliloti (strain 1021) (Ensifer meliloti).